A 360-amino-acid polypeptide reads, in one-letter code: Peptide chain release factor 1 (360 aa).

Gln-235 carries the post-translational modification N5-methylglutamine. The tract at residues Lys-285–Asn-311 is disordered. Positions Ser-292–Arg-308 are enriched in basic and acidic residues.

This sequence belongs to the prokaryotic/mitochondrial release factor family. In terms of processing, methylated by PrmC. Methylation increases the termination efficiency of RF1.

The protein resides in the cytoplasm. Its function is as follows. Peptide chain release factor 1 directs the termination of translation in response to the peptide chain termination codons UAG and UAA. The polypeptide is Peptide chain release factor 1 (Hamiltonella defensa subsp. Acyrthosiphon pisum (strain 5AT)).